The following is an 88-amino-acid chain: Large ribosomal subunit protein bL27 (88 aa).

The tract at residues 1 to 21 (MAHKKGVGSSRNGRDSQPKML) is disordered.

Belongs to the bacterial ribosomal protein bL27 family.

The polypeptide is Large ribosomal subunit protein bL27 (Pelotomaculum thermopropionicum (strain DSM 13744 / JCM 10971 / SI)).